Consider the following 735-residue polypeptide: Mitochondrial potassium channel ATP-binding subunit (735 aa).

Residues 1–25 (MLVHLFRVGIRGGPFPGRLLPPLRF) constitute a mitochondrion transit peptide. Residues 26–144 (QTFSAVRNTW…KLFWQFLHPH (119 aa)) lie on the Mitochondrial matrix side of the membrane. A helical transmembrane segment spans residues 145 to 165 (LLVLGVAVVLALGAALVNVQI). Residues 150–437 (VAVVLALGAA…LSVLFGQVVR (288 aa)) form the ABC transmembrane type-1 domain. At 166–195 (PLLLGQLVEVVAKYTRDHVGSFMTESQNLS) the chain is on the mitochondrial intermembrane side. The chain crosses the membrane as a helical span at residues 196 to 216 (THLLILYGVQGLLTFGYLVLL). Over 217–295 (SHVGERMAVD…SLSMLSTRLT (79 aa)) the chain is Mitochondrial matrix. The helical transmembrane segment at 296–316 (LLLMVATPALMGVGTLMGSGL) threads the bilayer. Topologically, residues 317–735 (RKLSRQCQEQ…EGPRSHQHKS (419 aa)) are mitochondrial intermembrane. In terms of domain architecture, ABC transporter spans 472–709 (VTFQNVCFSY…GGLYAELIRR (238 aa)). Position 507-514 (507-514 (GQSGGGKT)) interacts with ATP. A disordered region spans residues 712-735 (LDAPRTAAPPPKKPEGPRSHQHKS).

It belongs to the ABC transporter superfamily. ABCB family. Multidrug resistance exporter (TC 3.A.1.201) subfamily. As to quaternary structure, the mitochondrial potassium channel (mitoK(ATP)) is composed of 4 subunits of CCDC51/MITOK and 4 subunits of ABCB8/MITOSUR. Interacts with C10orf88/PAAT. Interacts with NRP1; NRP1 regulates ABCB8/MITOSUR protein levels in mitochondria. Ubiquitous.

It localises to the mitochondrion inner membrane. With respect to regulation, channel activity inhibited by ATP via ABCB8/MITOSUR subunit. ATP-binding subunit of the mitochondrial ATP-gated potassium channel (mitoK(ATP)). Together with pore-forming subunit CCDC51/MITOK of the mitoK(ATP) channel, mediates ATP-dependent potassium currents across the mitochondrial inner membrane. An increase in ATP intracellular levels closes the channel, inhibiting K(+) transport, whereas a decrease in ATP levels enhances K(+) uptake in the mitochondrial matrix. Plays a role in mitochondrial iron transport. Required for maintenance of normal cardiac function, possibly by influencing mitochondrial iron export and regulating the maturation of cytosolic iron sulfur cluster-containing enzymes. The chain is Mitochondrial potassium channel ATP-binding subunit from Homo sapiens (Human).